Here is a 92-residue protein sequence, read N- to C-terminus: YcgL domain-containing protein VC_1957 (92 aa).

Residues 1-84 enclose the YcgL domain; sequence MLCSIYKSPK…PPENLLEQHK (84 aa). The tract at residues 69–92 is disordered; the sequence is FLQLPPPPENLLEQHKERKARQTP.

The polypeptide is YcgL domain-containing protein VC_1957 (Vibrio cholerae serotype O1 (strain ATCC 39315 / El Tor Inaba N16961)).